Reading from the N-terminus, the 542-residue chain is MATILDDRSVNLELVTIYEISKILGSSLDLSKTLREVLNVLSAHLETKRVLLSLMQDSGELQLVSAIGLSYEEFQSGRYRVGEGITGKIFQTETPIVVRDLAQEPLFLARTSPRQSQDGEVISFVGVPIKAAREMLGVLCVFRDGQSPSRSVDHEVRLLTMVANLIGQTVRLYRSVAAERQQLQEEKRQLSRQLQGKYKLDNVIGISKAMQEVFAQVHQSAPSRSTMLLRGESGTGKEVIARAIHYLSPRKDGPFIKVNCAALSETLLESELFGHEKGAFTGAQGERKGRFELAHGGTLFLDEIGEISPAFQAKLLRVLQEREFERVGGSRSIKVDVRLVTATNRDLEKAVAKGEFRADLYYRINVVSIFIPPLRERREDIPYLVEHFLEKFRVENQRAMVAMSPQAMKVMMNCYWPGNVRELENCVERTATMMRGDLITEVHFSCQQNKCLTKVLHEPGQQQPVVVVPLERISAPYGAIFAEWDGQGQATGAAPPTSERERLIWAMEQCGWVQAKAARALNISPRQMGYALQKFNIEVKKF.

Residues 29 to 170 enclose the GAF domain; that stretch reads DLSKTLREVL…MVANLIGQTV (142 aa). Residues 203-432 form the Sigma-54 factor interaction domain; the sequence is VIGISKAMQE…LENCVERTAT (230 aa). Residues 231 to 238 and 294 to 303 each bind ATP; these read GESGTGKE and AHGGTLFLDE. The interval 433-499 is inter-domain linker; that stretch reads MMRGDLITEV…ATGAAPPTSE (67 aa). Positions 446 and 451 each coordinate a divalent metal cation. The C-terminal DNA-binding domain stretch occupies residues 500 to 542; sequence RERLIWAMEQCGWVQAKAARALNISPRQMGYALQKFNIEVKKF. Residues 514–533 constitute a DNA-binding region (H-T-H motif); sequence QAKAARALNISPRQMGYALQ.

As to quaternary structure, interacts with sigma-54.

In terms of biological role, required for activation of most nif operons, which are directly involved in nitrogen fixation. This chain is Nif-specific regulatory protein (nifA), found in Herbaspirillum seropedicae.